We begin with the raw amino-acid sequence, 565 residues long: 13S globulin seed storage protein 1 (565 aa).

A signal peptide spans 1 to 20 (MSTKLILSFSLCLMVLSCSA). Cystine bridges form between Cys44–Cys77 and Cys120–Cys384. Positions 49–331 (LTASEPSRRV…FRNVDQETIS (283 aa)) constitute a Cupin type-1 1 domain. 3 disordered regions span residues 126 to 224 (SESE…IRDG), 271 to 301 (GQSKQSREDRRSQRQTREEGSDRQSRESDDD), and 356 to 376 (EYEEELQRERGDRKRGGSGRS). Basic and acidic residues-rich tracts occupy residues 137–224 (RDQR…IRDG), 275–297 (QSREDRRSQRQTREEGSDRQSRE), and 356–370 (EYEEELQRERGDRKR). In terms of domain architecture, Cupin type-1 2 spans 390-539 (QNVNRPSRAD…SYDISTKEAF (150 aa)).

Belongs to the 11S seed storage protein (globulins) family. In terms of assembly, hexamer; each subunit is composed of an acidic and a basic chain derived from a single precursor and linked by a disulfide bond. As to expression, expressed only in immature seeds.

In terms of biological role, seed storage protein. This is 13S globulin seed storage protein 1 (FA02) from Fagopyrum esculentum (Common buckwheat).